A 59-amino-acid polypeptide reads, in one-letter code: Small, acid-soluble spore protein H 2 (59 aa).

This sequence belongs to the SspH family.

It is found in the spore core. In Bacillus cereus (strain ATCC 14579 / DSM 31 / CCUG 7414 / JCM 2152 / NBRC 15305 / NCIMB 9373 / NCTC 2599 / NRRL B-3711), this protein is Small, acid-soluble spore protein H 2 (sspH2).